The chain runs to 589 residues: WD repeat-containing protein 26 homolog (589 aa).

The segment at 1 to 57 (MGVVEDTEPPLKRAKRLADEPNGFSANSSVRGSSVNSNSLGDLMARPLPSQGDDETI) is disordered. The span at 25–39 (SANSSVRGSSVNSNS) shows a compositional bias: low complexity. One can recognise a LisH domain in the interval 64 to 96 (RKSEFVRIITRALYSLGYDKTGAMLEEESGISL). The CTLH domain occupies 97-154 (HNSTIKLFLQQVKDGKWDQSVKTLHRIGFPDEKAVKAASFLLLEQKFLEFLKVEKIAD). WD repeat units lie at residues 272–311 (SHTD…HISL), 317–358 (GHHK…HMYE), 360–398 (GGIS…KECW), 401–440 (QRTQ…ERLI), 442–480 (EEDM…KIVS), 484–526 (GHKR…LIVE), and 529–569 (GHAG…QQNQ).

In terms of assembly, interacts with RANBPM. Expressed in roots, leaves and flowers.

Its subcellular location is the cytoplasm. Functionally, acts as a component involved in the crosstalk regulation between light, hormone and abiotic stress response. In Arabidopsis thaliana (Mouse-ear cress), this protein is WD repeat-containing protein 26 homolog.